Here is a 271-residue protein sequence, read N- to C-terminus: Protein CDV3 homolog (271 aa).

The span at 37-47 (KREVVKPKKPE) shows a compositional bias: basic and acidic residues. 2 disordered regions span residues 37 to 151 (KREV…GHGP) and 186 to 271 (SQQA…DEAS). Residues 48–61 (VAAGGVAVVGENEN) are compositionally biased toward low complexity. Over residues 73–82 (VEEEWKEFEE) the composition is skewed to acidic residues. Positions 95 to 114 (QLSTISSARSRTAQESSESQ) are enriched in polar residues. Serine 134 is modified (phosphoserine). Over residues 224–242 (RPEEQRKKKNEPAFEEVRH) the composition is skewed to basic and acidic residues.

It belongs to the CDV3 family.

The sequence is that of Protein CDV3 homolog from Drosophila melanogaster (Fruit fly).